Reading from the N-terminus, the 156-residue chain is Small ribosomal subunit protein uS7 (156 aa).

The protein belongs to the universal ribosomal protein uS7 family. Part of the 30S ribosomal subunit. Contacts proteins S9 and S11.

Functionally, one of the primary rRNA binding proteins, it binds directly to 16S rRNA where it nucleates assembly of the head domain of the 30S subunit. Is located at the subunit interface close to the decoding center, probably blocks exit of the E-site tRNA. The sequence is that of Small ribosomal subunit protein uS7 from Shewanella loihica (strain ATCC BAA-1088 / PV-4).